The sequence spans 452 residues: MAGYLRVVRSLCRASGSRPAWAPAALTAPTSQEQTRRHYADKRIKVAKPVVEMDGDEMTRIIWQFIKEKLILPHVDIQLKYFDLGLPNRDQTDDQVTIDSALATQKYSVAVKCATITPDEARVEEFKLKKMWKSPNGTIRNILGGTVFREPIICKNIPRLVPGWTKPITIGRHAHGDQYKATDFVADRAGTFKMVFTPKDGSGVKEWEVYNFPAGGVGMGMYNTDESISGFAHSCFQYAIQKKWPLYMSTKNTILKAYDGRFKDIFQEIFDKHYKTDFDKNKIWYEHRLIDDMVAQVLKSSGGFVWACKNYDGDVQSDILAQGFGSLGLMTSVLVCPDGKTIEAEAAHGTVTRHYREHQKGRPTSTNPIASIFAWTRGLEHRGKLDGNQDLIRFAQTLEKVCVETVESGAMTKDLAGCIHGLSNVKLNEHFLNTTDFLDTIKSNLDRALGRQ.

Residues 1–39 (MAGYLRVVRSLCRASGSRPAWAPAALTAPTSQEQTRRHY) constitute a mitochondrion transit peptide. 4 positions are modified to N6-acetyllysine: Lys-45, Lys-48, Lys-67, and Lys-69. Residues Lys-80 and Lys-106 each carry the N6-acetyllysine; alternate modification. N6-succinyllysine; alternate is present on residues Lys-80 and Lys-106. NADP(+) contacts are provided by residues 115–117 (TIT) and Arg-122. Position 117 (Thr-117) interacts with substrate. Substrate contacts are provided by residues 134 to 140 (SPNGTIR) and Arg-149. Lys-155 carries the post-translational modification N6-acetyllysine. The residue at position 166 (Lys-166) is an N6-acetyllysine; alternate. Lys-166 is modified (N6-succinyllysine; alternate). Arg-172 contacts substrate. N6-acetyllysine; alternate is present on residues Lys-180 and Lys-193. N6-succinyllysine; alternate occurs at positions 180 and 193. Position 199 is an N6-acetyllysine (Lys-199). Residue Lys-256 is modified to N6-acetyllysine; alternate. Lys-256 is modified (N6-succinyllysine; alternate). 4 positions are modified to N6-acetyllysine: Lys-263, Lys-272, Lys-275, and Lys-280. Lys-282 bears the N6-acetyllysine; alternate mark. The residue at position 282 (Lys-282) is an N6-succinyllysine; alternate. Asp-291 provides a ligand contact to Mn(2+). Lys-299 serves as a coordination point for NADP(+). Asp-314 is a Mn(2+) binding site. Residues 349–354 (GTVTRH) and Asn-367 each bind NADP(+). The residue at position 384 (Lys-384) is an N6-acetyllysine; alternate. The residue at position 384 (Lys-384) is an N6-succinyllysine; alternate. An N6-acetyllysine mark is found at Lys-400, Lys-413, and Lys-442.

It belongs to the isocitrate and isopropylmalate dehydrogenases family. As to quaternary structure, homodimer. Mg(2+) is required as a cofactor. The cofactor is Mn(2+). In terms of processing, acetylation at Lys-413 dramatically reduces catalytic activity. Deacetylated by SIRT3.

The protein localises to the mitochondrion. The catalysed reaction is D-threo-isocitrate + NADP(+) = 2-oxoglutarate + CO2 + NADPH. Functionally, plays a role in intermediary metabolism and energy production. It may tightly associate or interact with the pyruvate dehydrogenase complex. In Macaca fascicularis (Crab-eating macaque), this protein is Isocitrate dehydrogenase [NADP], mitochondrial (IDH2).